A 305-amino-acid polypeptide reads, in one-letter code: Pseudouridine-5'-phosphate glycosidase (305 aa).

Glutamate 30 acts as the Proton donor in catalysis. Substrate is bound by residues lysine 91 and valine 111. Aspartate 143 contacts Mn(2+). 145–147 contacts substrate; the sequence is SAD. The Nucleophile role is filled by lysine 164.

The protein belongs to the pseudouridine-5'-phosphate glycosidase family. As to quaternary structure, homotrimer. The cofactor is Mn(2+).

The enzyme catalyses D-ribose 5-phosphate + uracil = psi-UMP + H2O. Its function is as follows. Catalyzes the reversible cleavage of pseudouridine 5'-phosphate (PsiMP) to ribose 5-phosphate and uracil. Functions biologically in the cleavage direction, as part of a pseudouridine degradation pathway. The chain is Pseudouridine-5'-phosphate glycosidase from Mesorhizobium japonicum (strain LMG 29417 / CECT 9101 / MAFF 303099) (Mesorhizobium loti (strain MAFF 303099)).